Here is a 105-residue protein sequence, read N- to C-terminus: Phosphoribosyl-AMP cyclohydrolase (105 aa).

Position 72 (Asp-72) interacts with Mg(2+). Cys-73 is a Zn(2+) binding site. The Mg(2+) site is built by Asp-74 and Asp-76. 2 residues coordinate Zn(2+): Cys-89 and Cys-96.

The protein belongs to the PRA-CH family. As to quaternary structure, homodimer. Requires Mg(2+) as cofactor. Zn(2+) is required as a cofactor.

The protein resides in the cytoplasm. It catalyses the reaction 1-(5-phospho-beta-D-ribosyl)-5'-AMP + H2O = 1-(5-phospho-beta-D-ribosyl)-5-[(5-phospho-beta-D-ribosylamino)methylideneamino]imidazole-4-carboxamide. Its pathway is amino-acid biosynthesis; L-histidine biosynthesis; L-histidine from 5-phospho-alpha-D-ribose 1-diphosphate: step 3/9. In terms of biological role, catalyzes the hydrolysis of the adenine ring of phosphoribosyl-AMP. This chain is Phosphoribosyl-AMP cyclohydrolase, found in Listeria monocytogenes serotype 4a (strain HCC23).